We begin with the raw amino-acid sequence, 316 residues long: MKELVVVAIGGNSIIKDNASQSIEHQAEAVKAVADTVLEMLASDYDIVLTHGNGPQVGLDLRRAEIAHKREGLPLTPLANCVADTQGGIGYLIQQALNNRLARHGEKKAVTVVTQVEVDKNDPGFAHPTKPIGAFFSDSQRDELQKANPDWCFVEDAGRGYRRVVASPEPKRIVEAPAIKALIQQGFVVIGAGGGGIPVVRTDAGDYQSVDAVIDKDLSTALLAREIHADILVITTGVEKVCIHFGKPQQQALDRVDIATMTRYMQEGHFPPGSMLPKIIASLTFLEQGGKEVIITTPECLPAALRGETGTHIIKT.

Belongs to the carbamate kinase family.

This is Carbamate kinase-like protein YahI (yahI) from Escherichia coli (strain K12).